We begin with the raw amino-acid sequence, 229 residues long: MKSSDIDQDLFTDSYCKVCSAQLISESQRVAHYESRKHASKVRLYYMLHPRDGGCPAKRLRSENGSDADMVDKNKCCTLCNMSFTSAVVADSHYQGKIHAKRLKLLLGEKTPLKTTATPLSPLKPPRMDTAPVVASPYQRRDSDRYCGLCAAWFNNPLMAQQHYDGKKHKKNAARVALLEQLGTTLDMGELRGLRRNYRCTICSVSLNSIEQYHAHLKGSKHQTNLKNK.

2 Matrin-type zinc fingers span residues 14–44 and 72–106; these read SYCKVCSAQLISESQRVAHYESRKHASKVRL and DKNKCCTLCNMSFTSAVVADSHYQGKIHAKRLKLL. Residues 116 to 135 are disordered; the sequence is TATPLSPLKPPRMDTAPVVA. Matrin-type zinc fingers lie at residues 145–175 and 198–228; these read RYCGLCAAWFNNPLMAQQHYDGKKHKKNAAR and YRCTICSVSLNSIEQYHAHLKGSKHQTNLKN.

The protein localises to the nucleus. This is Zinc finger matrin-type protein 4 (ZMAT4) from Homo sapiens (Human).